Reading from the N-terminus, the 289-residue chain is Putative 2-aminoethylphosphonate transport system permease protein PhnU (289 aa).

A run of 6 helical transmembrane segments spans residues 19–39 (WLLL…SLIV), 76–96 (FFAT…LVFI), 111–131 (FIAL…GSAG), 150–170 (FLYS…PLVM), 202–222 (VIFP…LLLT), and 254–274 (YTVA…LFSL). The ABC transmembrane type-1 domain occupies 68–275 (LLNTLQIAFF…VLSLGLFSLY (208 aa)).

This sequence belongs to the binding-protein-dependent transport system permease family.

It is found in the cell inner membrane. Probably part of the PhnSTUV complex (TC 3.A.1.11.5) involved in 2-aminoethylphosphonate import. Probably responsible for the translocation of the substrate across the membrane. The protein is Putative 2-aminoethylphosphonate transport system permease protein PhnU (phnU) of Salmonella paratyphi A (strain ATCC 9150 / SARB42).